An 81-amino-acid polypeptide reads, in one-letter code: Xenopsin peptides (81 aa).

An N-terminal signal peptide occupies residues 1–20 (MYKGIFLCVLLAVICANSLA). A propeptide spanning residues 21–37 (TPSSDADEDNDEVERYV) is cleaved from the precursor. The propeptide at 65–73 (EAMLRSAEA) is removed in mature form by a dipeptidylpeptidase.

This sequence belongs to the gastrin/cholecystokinin family. Magainin subfamily. As to expression, XPF is synthesized in the stomach and stored in a novel granular multinucleated cell in the gastric mucosa, it is stored as active, processed peptides in large granules within the granular gland secretions of the skin.

It localises to the secreted. Its function is as follows. Xenopsin is a neurotensin-like octapeptide. Functionally, XPF has antimicrobial activity. The polypeptide is Xenopsin peptides (Xenopus laevis (African clawed frog)).